Reading from the N-terminus, the 492-residue chain is Ketol-acid reductoisomerase (NADP(+)) (492 aa).

Residues 14 to 208 (LDQLGRCRFM…GGHKAGVLES (195 aa)) enclose the KARI N-terminal Rossmann domain. NADP(+) is bound by residues 45–48 (CGAQ), arginine 68, arginine 76, serine 78, and 108–110 (DKQ). Histidine 132 is an active-site residue. An NADP(+)-binding site is contributed by glycine 158. KARI C-terminal knotted domains are found at residues 209–344 (SFVA…NAPK) and 345–485 (YDGK…MTDM). Positions 217, 221, 389, and 393 each coordinate Mg(2+). A substrate-binding site is contributed by serine 414.

The protein belongs to the ketol-acid reductoisomerase family. It depends on Mg(2+) as a cofactor.

It carries out the reaction (2R)-2,3-dihydroxy-3-methylbutanoate + NADP(+) = (2S)-2-acetolactate + NADPH + H(+). The enzyme catalyses (2R,3R)-2,3-dihydroxy-3-methylpentanoate + NADP(+) = (S)-2-ethyl-2-hydroxy-3-oxobutanoate + NADPH + H(+). The protein operates within amino-acid biosynthesis; L-isoleucine biosynthesis; L-isoleucine from 2-oxobutanoate: step 2/4. It participates in amino-acid biosynthesis; L-valine biosynthesis; L-valine from pyruvate: step 2/4. Functionally, involved in the biosynthesis of branched-chain amino acids (BCAA). Catalyzes an alkyl-migration followed by a ketol-acid reduction of (S)-2-acetolactate (S2AL) to yield (R)-2,3-dihydroxy-isovalerate. In the isomerase reaction, S2AL is rearranged via a Mg-dependent methyl migration to produce 3-hydroxy-3-methyl-2-ketobutyrate (HMKB). In the reductase reaction, this 2-ketoacid undergoes a metal-dependent reduction by NADPH to yield (R)-2,3-dihydroxy-isovalerate. The sequence is that of Ketol-acid reductoisomerase (NADP(+)) from Haemophilus influenzae (strain PittEE).